The chain runs to 100 residues: Small ribosomal subunit protein uS14c (100 aa).

It belongs to the universal ribosomal protein uS14 family. As to quaternary structure, part of the 30S ribosomal subunit.

The protein resides in the plastid. It is found in the chloroplast. Binds 16S rRNA, required for the assembly of 30S particles. This is Small ribosomal subunit protein uS14c from Eucalyptus globulus subsp. globulus (Tasmanian blue gum).